Reading from the N-terminus, the 453-residue chain is Transcription factor bHLH110 (453 aa).

2 disordered regions span residues Met-1–Ser-37 and Ser-177–Phe-197. Low complexity-rich tracts occupy residues Gln-8–Ser-32 and Ser-177–Ser-192. Residues Val-322–Leu-371 form the bHLH domain. The interval Ser-386–Leu-411 is disordered.

Homodimer.

Its subcellular location is the nucleus. This chain is Transcription factor bHLH110 (BHLH110), found in Arabidopsis thaliana (Mouse-ear cress).